The sequence spans 282 residues: Pantothenate synthetase (282 aa).

Position 30–37 (30–37 (MGYLHEGH)) interacts with ATP. Residue histidine 37 is the Proton donor of the active site. Glutamine 61 provides a ligand contact to (R)-pantoate. Glutamine 61 is a beta-alanine binding site. Residue 147-150 (GMKD) participates in ATP binding. Position 153 (glutamine 153) interacts with (R)-pantoate. Residues valine 176 and 184-187 (KSSR) each bind ATP.

This sequence belongs to the pantothenate synthetase family. As to quaternary structure, homodimer.

It is found in the cytoplasm. The enzyme catalyses (R)-pantoate + beta-alanine + ATP = (R)-pantothenate + AMP + diphosphate + H(+). Its pathway is cofactor biosynthesis; (R)-pantothenate biosynthesis; (R)-pantothenate from (R)-pantoate and beta-alanine: step 1/1. In terms of biological role, catalyzes the condensation of pantoate with beta-alanine in an ATP-dependent reaction via a pantoyl-adenylate intermediate. The protein is Pantothenate synthetase of Bacillus thuringiensis (strain Al Hakam).